Consider the following 466-residue polypeptide: Glucose-6-phosphate 1-dehydrogenase 1 (466 aa).

Residues Ser-48, 88-89 (DV), and Lys-141 contribute to the NADP(+) site. The substrate site is built by His-171, Lys-175, Glu-209, and Asp-228. The Proton acceptor role is filled by His-233. Positions 319 and 324 each coordinate substrate.

Belongs to the glucose-6-phosphate dehydrogenase family.

The enzyme catalyses D-glucose 6-phosphate + NADP(+) = 6-phospho-D-glucono-1,5-lactone + NADPH + H(+). Its pathway is carbohydrate degradation; pentose phosphate pathway; D-ribulose 5-phosphate from D-glucose 6-phosphate (oxidative stage): step 1/3. Functionally, catalyzes the oxidation of glucose 6-phosphate to 6-phosphogluconolactone. This is Glucose-6-phosphate 1-dehydrogenase 1 from Mycobacterium tuberculosis (strain CDC 1551 / Oshkosh).